The chain runs to 189 residues: Interferon alpha-B (189 aa).

The signal sequence occupies residues 1–23 (MAPAWSFLLALLLLSCNAICSLG). Disulfide bonds link C24–C122 and C52–C162.

The protein belongs to the alpha/beta interferon family.

It localises to the secreted. Functionally, produced by macrophages, IFN-alpha have antiviral activities. Interferon stimulates the production of two enzymes: a protein kinase and an oligoadenylate synthetase. The polypeptide is Interferon alpha-B (IFNAB) (Bos taurus (Bovine)).